The sequence spans 306 residues: Tricarboxylate transporter FUM11 (306 aa).

Solcar repeat units lie at residues 18–98 (SDTL…YQKL), 109–195 (FGIL…LKQV), and 206–292 (IGTV…VVEG). A run of 6 helical transmembrane segments spans residues 24 to 44 (LVAG…AEFA), 67 to 87 (GLQW…KTSI), 113 to 133 (LAGF…SERI), 170 to 189 (GFWP…LGSY), 209 to 229 (VKTF…TQPL), and 267 to 286 (GAVA…FMVY).

It belongs to the mitochondrial carrier (TC 2.A.29) family.

Its subcellular location is the mitochondrion inner membrane. It functions in the pathway mycotoxin biosynthesis. Tricarboxylate transporter; part of the gene cluster that mediates the biosynthesis of fumonisins B1 (FB1), B2 (FB2), B3 (FB3), and B4 (FB4), which are carcinogenic mycotoxins. Within the pathway, FUM11 is involved the addition of the tricarballylic moieties to the carbon backbone. FUM11 makes a tricarboxylic acid precursor available for fumonisin biosynthesis via its export from the mitochondria. The biosynthesis starts with the FUM1-catalyzed carbon chain assembly from one molecule of acetyl-CoA, eight molecules of malonyl-CoA, and two molecules of methionine (in S-adenosyl form). The C18 polyketide chain is released from the enzyme by a nucleophilic attack of a carbanion, which is derived from R-carbon of alanine by decarboxylation, on the carbonyl carbon of polyketide acyl chain. This step is catalyzed by the pyridoxal 5'-phosphate-dependent aminoacyl transferase FUM8. The resultant 3-keto intermediate is then stereospecifically reduced to a 3-hydroxyl product by reductase FUM13. Subsequent oxidations at C-10 by the cytochrome P450 monooxygenase FUM2, C-14 and C-15 by FUM6, FUM12 or FUM15, tricarballylic esterification of the hydroxyl groups on C-14 and C-15 by acyltransferase FUM14, and C-5 hydroxylation by 2-keto-glutarate-dependent dioxygenase FUM3 furnish the biosynthesis of fumonisins. The tricarballylic moieties are most likely derived from the citric acid cycle, and their addition to the carbon backbone may involve FUM7, FUM10, FUM11 and FUM14. This chain is Tricarboxylate transporter FUM11, found in Gibberella moniliformis (strain M3125 / FGSC 7600) (Maize ear and stalk rot fungus).